A 752-amino-acid polypeptide reads, in one-letter code: Two pore channel protein 2 (752 aa).

Topologically, residues 1–84 (MAEPQAESEP…RRYYSNVCQR (84 aa)) are cytoplasmic. Residues 85–105 (TLSFTIFLILFLAFIETPSSL) form a helical membrane-spanning segment. At 106 to 127 (TSTADVRYRAAPWEPPCGLTES) the chain is on the extracellular side. The chain crosses the membrane as a helical span at residues 128-148 (VEVLCLLVFAADLSVKGYLFG). Topologically, residues 149–155 (WAHFQKN) are cytoplasmic. The chain crosses the membrane as a helical span at residues 156 to 176 (LWLLGYLVVLVVSLVDWTVSL). Topologically, residues 177 to 183 (SLVCHEP) are extracellular. The chain crosses the membrane as a helical span at residues 184-204 (LRIRRLLRPFFLLQNSSMMKK). An interaction with phosphatidylinositol 3,5-bisphosphate region spans residues 203–207 (KKTLK). The Cytoplasmic segment spans residues 205 to 218 (TLKCIRWSLPEMAS). A helical membrane pass occupies residues 219-239 (VGLLLAIHLCLFTMFGMLLFA). Topologically, residues 240-254 (GGKQDDGQDRERLTY) are extracellular. The helical; Pore-forming intramembrane region spans 255 to 279 (FQNLPESLTSLLVLLTTANNPDVMI). Residues 280–289 (PAYSKNRAYA) lie on the Extracellular side of the membrane. Residues 290–310 (IFFIVFTVIGSLFLMNLLTAI) form a helical membrane-spanning segment. Residues 311–436 (IYSQFRGYLM…FLFGHYYFDY (126 aa)) are Cytoplasmic-facing. A helical membrane pass occupies residues 437–459 (LGNLIALANLVSICVFLVLDADV). The Extracellular portion of the chain corresponds to 460-465 (LPAERD). The helical transmembrane segment at 466 to 486 (DFILGILNCVFIVYYLLEMLL) threads the bilayer. At 487 to 502 (KVFALGLRGYLSYPSN) the chain is on the cytoplasmic side. The helical transmembrane segment at 503 to 523 (VFDGLLTVVLLVLEISTLAVY) threads the bilayer. The Extracellular segment spans residues 524–554 (RLPHPGWRPEMVGLLSLWDMTRMLNMLIVFR). The chain crosses the membrane as a helical span at residues 555-575 (FLRIIPSMKLMAVVASTVLGL). The Cytoplasmic segment spans residues 576 to 580 (VQNMR). The chain crosses the membrane as a helical span at residues 581–601 (AFGGILVVVYYVFAIIGINLF). Residues 602–635 (RGVIVALPGNSSLAPANGSAPCGSFEQLEYWANN) lie on the Extracellular side of the membrane. N611 and N618 each carry an N-linked (GlcNAc...) asparagine glycan. The helical; Pore-forming intramembrane region spans 636-658 (FDDFAAALVTLWNLMVVNNWQVF). Residues 659 to 673 (LDAYRRYSGPWSKIY) are Extracellular-facing. Residues 674 to 694 (FVLWWLVSSVIWVNLFLALIL) form a helical membrane-spanning segment. Residues 695–752 (ENFLHKWDPRSHLQPLAGTPEATYQMTVELLFRDILEEPGEDELTERLSQHPHLWLCR) lie on the Cytoplasmic side of the membrane.

This sequence belongs to the calcium channel alpha-1 subunit (TC 1.A.1.11) family. Two pore calcium channel subfamily. In terms of assembly, homodimer. Interacts with LRRK2. Interacts with HAX1. Interacts with MTOR; the interaction is required for TPCN2 ATP sensitivity. Found in a complex with LSM12, TPCN1 and TPCN2. Interacts with LSM12. N-glycosylated. Widely expressed. Expressed at high level in liver and kidney.

It localises to the late endosome membrane. The protein localises to the lysosome membrane. The protein resides in the melanosome membrane. The catalysed reaction is Na(+)(in) = Na(+)(out). It catalyses the reaction Ca(2+)(in) = Ca(2+)(out). Its activity is regulated as follows. Regulated by Mg(2+) ions, cytosolic Mg(2+) selectively inhibits outward current while lysosomal Mg(2+) modestly inhibits both the outward and inward currents. In the absence of Mg(2+), NAADP readily activates TPCN2, with properties similar to PI(3,5)P2. Na(+) current is inhibited by ATP in a MTORC-dependent manner. ATP sensitivity is independent of PI(3,5)P2. Both current elicited by PI(3,5)P2 as well as NAADP are inhibited by tetrandrine. In terms of biological role, intracellular channel initially characterized as a non-selective Ca(2+)-permeable channel activated by NAADP (nicotinic acid adenine dinucleotide phosphate), it is also a highly-selective Na(+) channel activated directly by PI(3,5)P2 (phosphatidylinositol 3,5-bisphosphate). Localizes to the lysosomal and late endosome membranes where it regulates organellar membrane excitability, membrane trafficking, and pH homeostasis. Is associated with a plethora of physiological processes, including mTOR-dependent nutrient sensing, skin pigmentation and autophagy. Ion selectivity is not fixed but rather agonist-dependent and under defined ionic conditions, can be readily activated by both NAADP and PI(3,5)P2. As calcium channel, it increases the pH in the lysosomal lumen, as sodium channel, it promotes lysosomal exocytosis. Plays a crucial role in endolysosomal trafficking in the endolysosomal degradation pathway and is potentially involved in the homeostatic control of many macromolecules and cell metabolites. Also expressed in melanosomes of pigmented cells where mediates a Ca(2+) channel and/or PI(3,5)P2-activated melanosomal Na(+) channel to acidify pH and inhibit tyrosinase activity required for melanogenesis and pigmentation. Unlike the voltage-dependent TPCN1, TPCN2 is voltage independent and can be activated solely by PI(3,5)P2 binding. In contrast, PI(4,5)P2, PI(3,4)P2, PI(3)P and PI(5)P have no obvious effect on channel activation. Functionally, (Microbial infection) During Ebola virus (EBOV) infection, controls the movement of endosomes containing virus particles and is required by EBOV to escape from the endosomal network into the cell cytoplasm. (Microbial infection) Required for cell entry of coronaviruses SARS-CoV and SARS-CoV-2, as well as human coronavirus EMC (HCoV-EMC), by endocytosis. This Homo sapiens (Human) protein is Two pore channel protein 2.